Here is a 613-residue protein sequence, read N- to C-terminus: V-type proton ATPase catalytic subunit A isoform 2 (613 aa).

Residue 240–247 (GAFGCGKT) coordinates ATP.

The protein belongs to the ATPase alpha/beta chains family. In terms of assembly, V-ATPase is a heteromultimeric enzyme composed of a peripheral catalytic V1 complex (main components: subunits A, B, C, D, E, and F) attached to an integral membrane V0 proton pore complex (main component: the proteolipid protein).

The enzyme catalyses ATP + H2O + 4 H(+)(in) = ADP + phosphate + 5 H(+)(out). Its function is as follows. Catalytic subunit of the peripheral V1 complex of vacuolar ATPase. V-ATPase vacuolar ATPase is responsible for acidifying a variety of intracellular compartments in eukaryotic cells. This chain is V-type proton ATPase catalytic subunit A isoform 2, found in Acetabularia acetabulum (Mermaid's wine glass).